We begin with the raw amino-acid sequence, 395 residues long: Dihydroorotate dehydrogenase (quinone), mitochondrial (395 aa).

The transit peptide at 1-10 (MAWRHLKKRA) directs the protein to the mitochondrion; not cleaved. Residues 1–10 (MAWRHLKKRA) lie on the Mitochondrial matrix side of the membrane. Residues 11-30 (QDAVIILGGGGLLFASYLMA) form a helical membrane-spanning segment. The Mitochondrial intermembrane portion of the chain corresponds to 31–395 (TGDERFYAEH…TDAIGADHRR (365 aa)). FMN-binding positions include 95 to 99 (AGFDK) and Ser-119. Lys-99 serves as a coordination point for substrate. 144 to 148 (NRYGF) contacts substrate. FMN is bound by residues Asn-180 and Asn-211. 211-216 (NVSSPN) serves as a coordination point for substrate. Ser-214 functions as the Nucleophile in the catalytic mechanism. Positions 254 and 282 each coordinate FMN. Residue 283 to 284 (NT) participates in substrate binding. FMN-binding positions include Gly-305, Gly-334, and 355 to 356 (YT).

This sequence belongs to the dihydroorotate dehydrogenase family. Type 2 subfamily. As to quaternary structure, monomer. The cofactor is FMN. The uncleaved transit peptide is required for mitochondrial targeting and proper membrane integration.

It is found in the mitochondrion inner membrane. It catalyses the reaction (S)-dihydroorotate + a quinone = orotate + a quinol. It participates in pyrimidine metabolism; UMP biosynthesis via de novo pathway; orotate from (S)-dihydroorotate (quinone route): step 1/1. In terms of biological role, catalyzes the conversion of dihydroorotate to orotate with quinone as electron acceptor. Required for UMP biosynthesis via de novo pathway. This is Dihydroorotate dehydrogenase (quinone), mitochondrial (DHODH) from Homo sapiens (Human).